The sequence spans 316 residues: Methionyl-tRNA formyltransferase (316 aa).

A (6S)-5,6,7,8-tetrahydrofolate-binding site is contributed by 112-115; the sequence is SLLP.

Belongs to the Fmt family.

The catalysed reaction is L-methionyl-tRNA(fMet) + (6R)-10-formyltetrahydrofolate = N-formyl-L-methionyl-tRNA(fMet) + (6S)-5,6,7,8-tetrahydrofolate + H(+). In terms of biological role, attaches a formyl group to the free amino group of methionyl-tRNA(fMet). The formyl group appears to play a dual role in the initiator identity of N-formylmethionyl-tRNA by promoting its recognition by IF2 and preventing the misappropriation of this tRNA by the elongation apparatus. This is Methionyl-tRNA formyltransferase from Actinobacillus pleuropneumoniae serotype 7 (strain AP76).